A 154-amino-acid chain; its full sequence is Endoribonuclease YbeY (154 aa).

3 residues coordinate Zn(2+): His-116, His-120, and His-126.

The protein belongs to the endoribonuclease YbeY family. Requires Zn(2+) as cofactor.

Its subcellular location is the cytoplasm. Its function is as follows. Single strand-specific metallo-endoribonuclease involved in late-stage 70S ribosome quality control and in maturation of the 3' terminus of the 16S rRNA. This Chromohalobacter salexigens (strain ATCC BAA-138 / DSM 3043 / CIP 106854 / NCIMB 13768 / 1H11) protein is Endoribonuclease YbeY.